A 651-amino-acid chain; its full sequence is Zinc metalloproteinase nas-32 (651 aa).

The signal sequence occupies residues 1–21; sequence MRRFFICYIGFLSIFLDFILA. Residues 22-202 constitute a propeptide that is removed on maturation; the sequence is DKDNNSEEER…EQSSKSRRKK (181 aa). Residues Asn-25, Asn-72, and Asn-251 are each glycosylated (N-linked (GlcNAc...) asparagine). The Peptidase M12A domain occupies 203 to 394; it reads RQIDNLAQFW…KMLNTHYSCS (192 aa). Disulfide bonds link Cys-245-Cys-393, Cys-264-Cys-283, Cys-395-Cys-412, Cys-415-Cys-426, Cys-434-Cys-467, and Cys-495-Cys-516. His-291 contributes to the Zn(2+) binding site. Residue Glu-292 is part of the active site. Positions 295 and 301 each coordinate Zn(2+). Positions 380–433 constitute an EGF-like domain; that stretch reads TFLDLKMLNTHYSCSCPTILSCGNGGFTNPANCSVCICPYGFGGALCTERTDYG. A glycan (N-linked (GlcNAc...) asparagine) is linked at Asn-411. One can recognise a CUB domain in the interval 434 to 554; the sequence is CGSTLTATDT…TTYTWSYRYV (121 aa). Asn-453 carries N-linked (GlcNAc...) asparagine glycosylation. Residue Asn-557 is glycosylated (N-linked (GlcNAc...) asparagine). Disulfide bonds link Cys-610–Cys-647, Cys-619–Cys-640, and Cys-628–Cys-644. A ShKT domain is found at 610–647; the sequence is CKDRFPKSQCSTYSTNGMCTQQPPLAAEFSCAETCGFC.

Zn(2+) is required as a cofactor. As to expression, expressed in pharyngeal, anal depressor, intestinal and vulva muscles, head neurons and head mesodermal cell.

It is found in the secreted. Functionally, metalloprotease. The chain is Zinc metalloproteinase nas-32 (nas-32) from Caenorhabditis elegans.